Reading from the N-terminus, the 283-residue chain is Formamidopyrimidine-DNA glycosylase (283 aa).

Proline 2 serves as the catalytic Schiff-base intermediate with DNA. Glutamate 3 (proton donor) is an active-site residue. Residue lysine 58 is the Proton donor; for beta-elimination activity of the active site. DNA is bound by residues histidine 100, arginine 119, and arginine 162. The FPG-type zinc finger occupies 247–283; sequence RVYGREGLPCVTPGCSGTVGRIVQSGRSSFHCPLCQR. Catalysis depends on arginine 273, which acts as the Proton donor; for delta-elimination activity.

This sequence belongs to the FPG family. As to quaternary structure, monomer. Zn(2+) serves as cofactor.

The enzyme catalyses Hydrolysis of DNA containing ring-opened 7-methylguanine residues, releasing 2,6-diamino-4-hydroxy-5-(N-methyl)formamidopyrimidine.. The catalysed reaction is 2'-deoxyribonucleotide-(2'-deoxyribose 5'-phosphate)-2'-deoxyribonucleotide-DNA = a 3'-end 2'-deoxyribonucleotide-(2,3-dehydro-2,3-deoxyribose 5'-phosphate)-DNA + a 5'-end 5'-phospho-2'-deoxyribonucleoside-DNA + H(+). In terms of biological role, involved in base excision repair of DNA damaged by oxidation or by mutagenic agents. Acts as a DNA glycosylase that recognizes and removes damaged bases. Has a preference for oxidized purines, such as 7,8-dihydro-8-oxoguanine (8-oxoG). Has AP (apurinic/apyrimidinic) lyase activity and introduces nicks in the DNA strand. Cleaves the DNA backbone by beta-delta elimination to generate a single-strand break at the site of the removed base with both 3'- and 5'-phosphates. The protein is Formamidopyrimidine-DNA glycosylase of Cereibacter sphaeroides (strain KD131 / KCTC 12085) (Rhodobacter sphaeroides).